Here is a 430-residue protein sequence, read N- to C-terminus: sn-glycerol-3-phosphate-binding periplasmic protein UgpB (430 aa).

The signal sequence occupies residues 1–20 (MRLISISTTIAFGFAFQAQA). 7 residues coordinate sn-glycerol 3-phosphate: tyrosine 62, aspartate 86, serine 141, serine 268, glycine 302, tyrosine 341, and arginine 392.

The protein belongs to the bacterial solute-binding protein 1 family. As to quaternary structure, the complex is composed of two ATP-binding proteins (UgpC), two transmembrane proteins (UgpA and UgpE) and a solute-binding protein (UgpB).

Its subcellular location is the periplasm. Functionally, part of the ABC transporter complex UgpBAEC involved in sn-glycerol-3-phosphate (G3P) import. Binds G3P. The protein is sn-glycerol-3-phosphate-binding periplasmic protein UgpB (ugpB) of Rhizobium meliloti (strain 1021) (Ensifer meliloti).